A 303-amino-acid polypeptide reads, in one-letter code: Recombination-associated protein RdgC (303 aa).

This sequence belongs to the RdgC family.

Its subcellular location is the cytoplasm. The protein resides in the nucleoid. Its function is as follows. May be involved in recombination. This Shewanella halifaxensis (strain HAW-EB4) protein is Recombination-associated protein RdgC.